The primary structure comprises 710 residues: Protein CNGC15a (710 aa).

A run of 6 helical transmembrane segments spans residues 85–105 (IFLA…YLPV), 115–135 (SIGL…FYII), 174–194 (LWSD…AVIP), 207–226 (VVRL…IYPL), 248–268 (YLTL…LLSI), and 368–388 (AEIN…ALLI). Residue 474-559 (LFDQMDDRML…WALDPRPTAV (86 aa)) participates in a nucleoside 3',5'-cyclic phosphate binding.

It belongs to the cyclic nucleotide-gated cation channel (TC 1.A.1.5) family. Interacts (via N-terminus) with DMI1 (via c-terminus). The Nod factor has no effect on this interaction, implying that the complex is maintained after activation. As to expression, expressed in roots, stems, leaves, flowers and pods.

It localises to the nucleus membrane. Its function is as follows. Cyclic nucleotide-gated channel involved in the establishment of both rhizobial and mycorrhizal associations. Required for full activation of nuclear-localized Ca(2+) oscillations by Nod and Myc factors. Simultaneous activation of the K(+)-permeable channel DMI1 and the Ca(2+) channel CNGC15 can give rise to sustained Ca(2+) oscillations. May function during fertilization in both female and male gametophytic Ca(2+) signaling. The protein is Protein CNGC15a of Medicago truncatula (Barrel medic).